Here is a 137-residue protein sequence, read N- to C-terminus: Small ribosomal subunit protein uS12 (137 aa).

Residues 1–57 (MPTINQLVRKPRKSKVEKPKSPALNVGYNSHKKVQTNVSSPQKRGVATRVGTMTPRK) form a disordered region. Asp-102 is modified (3-methylthioaspartic acid).

It belongs to the universal ribosomal protein uS12 family. Part of the 30S ribosomal subunit. Contacts proteins S8 and S17. May interact with IF1 in the 30S initiation complex.

In terms of biological role, with S4 and S5 plays an important role in translational accuracy. Its function is as follows. Interacts with and stabilizes bases of the 16S rRNA that are involved in tRNA selection in the A site and with the mRNA backbone. Located at the interface of the 30S and 50S subunits, it traverses the body of the 30S subunit contacting proteins on the other side and probably holding the rRNA structure together. The combined cluster of proteins S8, S12 and S17 appears to hold together the shoulder and platform of the 30S subunit. This Streptococcus pneumoniae (strain Hungary19A-6) protein is Small ribosomal subunit protein uS12.